The sequence spans 659 residues: Putative pentatricopeptide repeat-containing protein At3g16890, mitochondrial (659 aa).

Residues 1-32 constitute a mitochondrion transit peptide; it reads MRGFASSASRIATAAAASKSLNASTSVNPKLS. 15 PPR repeats span residues 109–143, 144–178, 179–213, 214–248, 249–283, 284–318, 319–353, 354–388, 389–423, 424–458, 459–493, 494–528, 529–563, 564–598, and 599–633; these read DQSL…GYRI, SDEL…GMKP, STRL…GCKP, DRFT…GNRP, NVFT…KLNP, NEAT…DSNL, QRVG…GYIP, DSST…GVKP, GFNG…GLLS, SVYS…GISP, NLVT…GFKP, DVIT…GIEP, NEIT…GLSP, DLYA…GLKP, and DNFT…GCVP.

Belongs to the PPR family. P subfamily.

Its subcellular location is the mitochondrion. Functionally, required for the ubiquinol-cytochrome c oxidoreductase activity of mitochondrial complex III. The polypeptide is Putative pentatricopeptide repeat-containing protein At3g16890, mitochondrial (PPR40) (Arabidopsis thaliana (Mouse-ear cress)).